The following is a 475-amino-acid chain: Arginine/ornithine antiporter (475 aa).

12 helical membrane-spanning segments follow: residues 10-30 (IGLL…GVFG), 42-62 (GPVL…ALSL), 74-94 (GIFS…SGWG), 101-121 (LGNV…FPIF), 157-177 (LVTI…IVLF), 205-225 (NCMM…MLSA), 238-258 (ILGL…PYGY), 283-303 (WGGY…WLSW), 333-353 (PTFA…TLLF), 361-381 (AYSL…AYQI), 397-417 (LLIG…AGVS), and 451-471 (WLIT…VVSG).

This sequence belongs to the amino acid-polyamine-organocation (APC) superfamily. Basic amino acid/polyamine antiporter (APA) (TC 2.A.3.2) family.

The protein resides in the cell membrane. The enzyme catalyses L-ornithine(in) + L-arginine(out) = L-ornithine(out) + L-arginine(in). Functionally, catalyzes electroneutral exchange between L-arginine and L-ornithine. The chain is Arginine/ornithine antiporter (arcD) from Latilactobacillus sakei (Lactobacillus sakei).